Here is a 291-residue protein sequence, read N- to C-terminus: Elongation factor Ts (291 aa).

Residues 79-82 (TDFV) are involved in Mg(2+) ion dislocation from EF-Tu.

The protein belongs to the EF-Ts family.

Its subcellular location is the cytoplasm. Functionally, associates with the EF-Tu.GDP complex and induces the exchange of GDP to GTP. It remains bound to the aminoacyl-tRNA.EF-Tu.GTP complex up to the GTP hydrolysis stage on the ribosome. This Leuconostoc mesenteroides subsp. mesenteroides (strain ATCC 8293 / DSM 20343 / BCRC 11652 / CCM 1803 / JCM 6124 / NCDO 523 / NBRC 100496 / NCIMB 8023 / NCTC 12954 / NRRL B-1118 / 37Y) protein is Elongation factor Ts.